The primary structure comprises 101 residues: NAD(P)H-quinone oxidoreductase subunit 4L, chloroplastic (101 aa).

Helical transmembrane passes span 2–22 (MLEH…YGLI), 32–52 (MCLE…SDLF), and 61–81 (IFSI…LAIV).

This sequence belongs to the complex I subunit 4L family. NDH is composed of at least 16 different subunits, 5 of which are encoded in the nucleus.

It is found in the plastid. It localises to the chloroplast thylakoid membrane. The enzyme catalyses a plastoquinone + NADH + (n+1) H(+)(in) = a plastoquinol + NAD(+) + n H(+)(out). It carries out the reaction a plastoquinone + NADPH + (n+1) H(+)(in) = a plastoquinol + NADP(+) + n H(+)(out). Its function is as follows. NDH shuttles electrons from NAD(P)H:plastoquinone, via FMN and iron-sulfur (Fe-S) centers, to quinones in the photosynthetic chain and possibly in a chloroplast respiratory chain. The immediate electron acceptor for the enzyme in this species is believed to be plastoquinone. Couples the redox reaction to proton translocation, and thus conserves the redox energy in a proton gradient. This is NAD(P)H-quinone oxidoreductase subunit 4L, chloroplastic from Nandina domestica (Heavenly bamboo).